Consider the following 300-residue polypeptide: Tyrosine recombinase XerC (300 aa).

The Core-binding (CB) domain maps to 2 to 87; sequence TSLSPLLEKF…SIKSFYKYLV (86 aa). Residues 108–294 enclose the Tyr recombinase domain; that stretch reads TLPKVLPVEE…TWEQLQQVYD (187 aa). Catalysis depends on residues R148, K172, H246, R249, and H272. The active-site O-(3'-phospho-DNA)-tyrosine intermediate is Y281.

This sequence belongs to the 'phage' integrase family. XerC subfamily. As to quaternary structure, forms a cyclic heterotetrameric complex composed of two molecules of XerC and two molecules of XerD.

It localises to the cytoplasm. Its function is as follows. Site-specific tyrosine recombinase, which acts by catalyzing the cutting and rejoining of the recombining DNA molecules. The XerC-XerD complex is essential to convert dimers of the bacterial chromosome into monomers to permit their segregation at cell division. It also contributes to the segregational stability of plasmids. The sequence is that of Tyrosine recombinase XerC from Myxococcus xanthus.